Reading from the N-terminus, the 476-residue chain is Zinc metalloproteinase/disintegrin (476 aa).

The signal sequence occupies residues 1-20; it reads MIQVLLVTICLAAFPYQGSS. Residues 21 to 192 constitute a propeptide that is removed on maturation; the sequence is IILESGNVND…ASQSNLTPEQ (172 aa). Gln-193 carries the post-translational modification Pyrrolidone carboxylic acid. The 196-residue stretch at 198 to 393 folds into the Peptidase M12B domain; sequence RYIELAVVAD…HNPQCILNKP (196 aa). Residues Glu-201 and Asp-285 each coordinate Ca(2+). 3 cysteine pairs are disulfide-bonded: Cys-309–Cys-388, Cys-348–Cys-372, and Cys-350–Cys-355. His-334 serves as a coordination point for Zn(2+). The active site involves Glu-335. The Zn(2+) site is built by His-338 and His-344. Residues Cys-388 and Asn-391 each coordinate Ca(2+). Positions 394–403 are excised as a propeptide; that stretch reads LTTVSGNELL. One can recognise a Disintegrin domain in the interval 395–476; sequence TTVSGNELLE…ADCPRNRFHA (82 aa). 6 disulfide bridges follow: Cys-409/Cys-424, Cys-411/Cys-419, Cys-418/Cys-441, Cys-432/Cys-438, Cys-437/Cys-462, and Cys-450/Cys-469. Residues 454 to 456 carry the Cell attachment site motif; it reads RGD.

This sequence belongs to the venom metalloproteinase (M12B) family. P-II subfamily. P-IIa sub-subfamily. As to quaternary structure, monomer (metalloprotease). Zn(2+) is required as a cofactor. Post-translationally, the N-terminus is blocked. In terms of processing, not glycosylated. In terms of tissue distribution, expressed by the venom gland.

It is found in the secreted. Its activity is regulated as follows. Inhibited by EDTA, and 1,10-phenanthroline, but not by PMSF. In terms of biological role, non-hemorrhagic proteinase that activates prothrombin (F2) calcium-independently. Activates factor X (F10) and hydrolyzes the Aalpha-chain and more slowly the Bbeta-chain of fibrin and fibrinogen without affecting the gamma chain. It induces neither detachment nor apoptosis of human endothelial cells and is also not able to trigger an endothelial pro-inflammatory cell response. Nitric oxide and prostacyclin levels released by endothelial cells are significantly increased after treatment with insularinase A. Its function is as follows. Inhibits ADP-induced platelet aggregation (IC(50)=0.8 uM for native protein). Interestingly, inhibits the adhesion of HUVECs to immobilized fibrinogen at very low concentrations (IC(50)=36 nM). This is Zinc metalloproteinase/disintegrin from Bothrops insularis (Golden lancehead).